Consider the following 89-residue polypeptide: Small ribosomal subunit protein uS15 (89 aa).

The protein belongs to the universal ribosomal protein uS15 family. In terms of assembly, part of the 30S ribosomal subunit. Forms a bridge to the 50S subunit in the 70S ribosome, contacting the 23S rRNA.

One of the primary rRNA binding proteins, it binds directly to 16S rRNA where it helps nucleate assembly of the platform of the 30S subunit by binding and bridging several RNA helices of the 16S rRNA. Functionally, forms an intersubunit bridge (bridge B4) with the 23S rRNA of the 50S subunit in the ribosome. The polypeptide is Small ribosomal subunit protein uS15 (Pectobacterium carotovorum subsp. carotovorum (strain PC1)).